A 343-amino-acid polypeptide reads, in one-letter code: MSAFTPASEVLLRHSDDFEQSRILFAGDLQDDLPARLDTAASRAHTQQFHHWQVLSRQMGDNARFSLVATADDVADCDTLIYYWPKNKPEAQFQLMNLLSLLPVGTDIFVVGENRSGVRSAEQMLADYAPLNKVDSARRCGLYFGRLEKQPVFDANKFWGEYSVDGLTVKTLPGVFSRDGLDVGSQLLLSTLTPHTKGKVLDVGCGAGVLSVAFARHSPKIRLTLCDVSAPAVEASRATLATNGVEGEVFASNVFSEVKGRFDMIISNPPFHDGMQTSLDAAQTLIRGAVRHLNSGGELRIVANAFLPYPDVLDETFGFHEVIAQTGRFKVYRAIMTRQAKKG.

This sequence belongs to the methyltransferase superfamily. RsmC family. In terms of assembly, monomer.

Its subcellular location is the cytoplasm. It carries out the reaction guanosine(1207) in 16S rRNA + S-adenosyl-L-methionine = N(2)-methylguanosine(1207) in 16S rRNA + S-adenosyl-L-homocysteine + H(+). Its function is as follows. Specifically methylates the guanine in position 1207 of 16S rRNA in the 30S particle. The polypeptide is Ribosomal RNA small subunit methyltransferase C (Escherichia coli O81 (strain ED1a)).